Here is a 92-residue protein sequence, read N- to C-terminus: Dynein light chain 1, cytoplasmic (92 aa).

It belongs to the dynein light chain family. As to quaternary structure, homodimer. Cytoplasmic dynein consists of two catalytic heavy chains (HCs) and a number of non-catalytic subunits which present intermediate chains (ICs), light intermediate chains (LICs) and light chains (LCs). Component of the nuclear pore complex (NPC). NPC constitutes the exclusive means of nucleocytoplasmic transport. NPCs allow the passive diffusion of ions and small molecules and the active, nuclear transport receptor-mediated bidirectional transport of macromolecules such as proteins, RNAs, ribonucleoparticles (RNPs), and ribosomal subunits across the nuclear envelope. Due to its 8-fold rotational symmetry, all subunits are present with 8 copies or multiples thereof. Part of the NUP82 subcomplex. In the complex, interacts directly with Nup159.

The protein resides in the cytoplasm. The protein localises to the cytoskeleton. Its subcellular location is the nucleus. It localises to the nuclear pore complex. In terms of biological role, acts as one of several non-catalytic accessory components of the cytoplasmic dynein complex that are thought to be involved in linking dynein to cargos and to adapter proteins that regulate dynein function. Cytoplasmic dynein 1 acts as a motor for the intracellular retrograde motility of vesicles and organelles along microtubules. May play a role in changing or maintaining the spatial distribution of cytoskeletal structures. Also a component of the nuclear pore complex where it may contribute to the stable association of the Nup82 subcomplex with the NPC. The chain is Dynein light chain 1, cytoplasmic (DYN2) from Saccharomyces cerevisiae (strain ATCC 204508 / S288c) (Baker's yeast).